A 73-amino-acid polypeptide reads, in one-letter code: uncharacterized protein (73 aa).

Helical transmembrane passes span 7 to 27 (LFSSLTFSLTVLFLLLLIPNL) and 47 to 67 (YFGYPSLGILFAGILSPIIIL).

It is found in the cell membrane. This is an uncharacterized protein from Methanocaldococcus jannaschii (strain ATCC 43067 / DSM 2661 / JAL-1 / JCM 10045 / NBRC 100440) (Methanococcus jannaschii).